We begin with the raw amino-acid sequence, 86 residues long: Gas vesicle protein A1 (86 aa).

Belongs to the gas vesicle GvpA family. As to quaternary structure, the gas vesicle shell is 2 nm thick and consists of a single layer of this protein. It forms helical ribs nearly perpendicular to the long axis of the vesicle.

The protein localises to the gas vesicle shell. Gas vesicles are hollow, gas filled proteinaceous nanostructures found in some microorganisms. During planktonic growth they allow positioning of the organism at a favorable depth for light or nutrient acquisition. GvpA forms the protein shell. In terms of biological role, it is not clear if the 2 type A proteins in this organism are functionally redundant. Its function is as follows. When the full gvp locus (gvpA1-gvpP-gvpQ-gvpA2-gvpR-gvpN-gvpF-gvpG-gvpL-gvpS-gvpK-gvpJ-gvpT-gvpU, called pNL26) is expressed in E.coli gas vesicles are made. This chain is Gas vesicle protein A1, found in Priestia megaterium (Bacillus megaterium).